A 686-amino-acid chain; its full sequence is Potassium-transporting ATPase ATP-binding subunit (686 aa).

2 consecutive transmembrane segments (helical) span residues 38–58 (VMFV…KDLV) and 64–84 (AAPL…VLFA). The disordered stretch occupies residues 101–123 (ALRKMRKETTARRWKDGREERVP). Residues 107 to 123 (KETTARRWKDGREERVP) are compositionally biased toward basic and acidic residues. 2 helical membrane-spanning segments follow: residues 224–244 (ILLV…VPLA) and 257–277 (VALL…AIGI). Aspartate 308 acts as the 4-aspartylphosphate intermediate in catalysis. Residues aspartate 345, glutamate 349, 378–385 (FTAQTRMS), and lysine 399 each bind ATP. Residues aspartate 522 and aspartate 526 each coordinate Mg(2+). Helical transmembrane passes span 592–612 (FAIL…LNVM), 620–640 (AVLS…PLAL), and 666–686 (VIVP…VGLA).

It belongs to the cation transport ATPase (P-type) (TC 3.A.3) family. Type IA subfamily. In terms of assembly, the system is composed of three essential subunits: KdpA, KdpB and KdpC.

The protein localises to the cell membrane. The enzyme catalyses K(+)(out) + ATP + H2O = K(+)(in) + ADP + phosphate + H(+). In terms of biological role, part of the high-affinity ATP-driven potassium transport (or Kdp) system, which catalyzes the hydrolysis of ATP coupled with the electrogenic transport of potassium into the cytoplasm. This subunit is responsible for energy coupling to the transport system and for the release of the potassium ions to the cytoplasm. The chain is Potassium-transporting ATPase ATP-binding subunit from Myxococcus xanthus.